We begin with the raw amino-acid sequence, 191 residues long: Negative modulator of initiation of replication (191 aa).

The tract at residues 96 to 97 (AV) is interaction with DNA.

It belongs to the SeqA family. In terms of assembly, homodimer. Polymerizes to form helical filaments.

It is found in the cytoplasm. Negative regulator of replication initiation, which contributes to regulation of DNA replication and ensures that replication initiation occurs exactly once per chromosome per cell cycle. Binds to pairs of hemimethylated GATC sequences in the oriC region, thus preventing assembly of replication proteins and re-initiation at newly replicated origins. Repression is relieved when the region becomes fully methylated. This Shewanella amazonensis (strain ATCC BAA-1098 / SB2B) protein is Negative modulator of initiation of replication.